A 144-amino-acid polypeptide reads, in one-letter code: Histone H2B.2, sperm (144 aa).

Positions methionine 1 to arginine 51 are disordered. 5 short sequence motifs (SPKK motif) span residues serine 4–lysine 7, serine 9–lysine 12, serine 14–arginine 17, serine 19–arginine 22, and serine 25–arginine 28. A phosphoserine mark is found at serine 14, serine 19, and serine 25. Over residues alanine 24 to arginine 51 the composition is skewed to basic residues. A glycan (O-linked (GlcNAc) serine) is linked at serine 131. A Glycyl lysine isopeptide (Lys-Gly) (interchain with G-Cter in ubiquitin) cross-link involves residue lysine 139.

This sequence belongs to the histone H2B family. As to quaternary structure, the nucleosome is a histone octamer containing two molecules each of H2A, H2B, H3 and H4 assembled in one H3-H4 heterotetramer and two H2A-H2B heterodimers. The octamer wraps approximately 147 bp of DNA. Post-translationally, monoubiquitination of Lys-139 gives a specific tag for epigenetic transcriptional activation and is also prerequisite for histone H3 'Lys-4' and 'Lys-79' methylation. Phosphorylated on SPKK motifs 3, 4 and 5; which may regulate DNA binding. Dephosphorylated during maturation of spermatids to mature sperm and rephosphorylated at fertilization. In terms of processing, glcNAcylation at Ser-131 promotes monoubiquitination of Lys-139. It fluctuates in response to extracellular glucose, and associates with transcribed genes.

The protein resides in the nucleus. The protein localises to the chromosome. Its function is as follows. Core component of nucleosome. Nucleosomes wrap and compact DNA into chromatin, limiting DNA accessibility to the cellular machineries which require DNA as a template. Histones thereby play a central role in transcription regulation, DNA repair, DNA replication and chromosomal stability. DNA accessibility is regulated via a complex set of post-translational modifications of histones, also called histone code, and nucleosome remodeling. In Strongylocentrotus purpuratus (Purple sea urchin), this protein is Histone H2B.2, sperm.